Here is a 356-residue protein sequence, read N- to C-terminus: Protein-glutamate methylesterase/protein-glutamine glutaminase 2 (356 aa).

One can recognise a Response regulatory domain in the interval 4–121; sequence KVLIVDDSAV…KGFLEESSHE (118 aa). 4-aspartylphosphate is present on Asp-55. Positions 169-356 constitute a CheB-type methylesterase domain; sequence FATTERIIAI…LELIAKAICR (188 aa). Catalysis depends on residues Ser-181, His-207, and Asp-303.

The protein belongs to the CheB family. In terms of processing, phosphorylated by CheA. Phosphorylation of the N-terminal regulatory domain activates the methylesterase activity.

The protein resides in the cytoplasm. It catalyses the reaction [protein]-L-glutamate 5-O-methyl ester + H2O = L-glutamyl-[protein] + methanol + H(+). The catalysed reaction is L-glutaminyl-[protein] + H2O = L-glutamyl-[protein] + NH4(+). Involved in chemotaxis. Part of a chemotaxis signal transduction system that modulates chemotaxis in response to various stimuli. Catalyzes the demethylation of specific methylglutamate residues introduced into the chemoreceptors (methyl-accepting chemotaxis proteins or MCP) by CheR. Also mediates the irreversible deamidation of specific glutamine residues to glutamic acid. The sequence is that of Protein-glutamate methylesterase/protein-glutamine glutaminase 2 from Chromobacterium violaceum (strain ATCC 12472 / DSM 30191 / JCM 1249 / CCUG 213 / NBRC 12614 / NCIMB 9131 / NCTC 9757 / MK).